We begin with the raw amino-acid sequence, 172 residues long: Peptide methionine sulfoxide reductase MsrA 1 (172 aa).

Residue Cys-14 is part of the active site.

It belongs to the MsrA Met sulfoxide reductase family.

It carries out the reaction L-methionyl-[protein] + [thioredoxin]-disulfide + H2O = L-methionyl-(S)-S-oxide-[protein] + [thioredoxin]-dithiol. The catalysed reaction is [thioredoxin]-disulfide + L-methionine + H2O = L-methionine (S)-S-oxide + [thioredoxin]-dithiol. Functionally, has an important function as a repair enzyme for proteins that have been inactivated by oxidation. Catalyzes the reversible oxidation-reduction of methionine sulfoxide in proteins to methionine. In Mesorhizobium japonicum (strain LMG 29417 / CECT 9101 / MAFF 303099) (Mesorhizobium loti (strain MAFF 303099)), this protein is Peptide methionine sulfoxide reductase MsrA 1 (msrA1).